The following is a 254-amino-acid chain: MNAMTAFSLNGAAPLANADELEAALRQIGAARYHNLHPFHRLLHGGKLNKGQVQAWALNRYYYQSSIPIKDAVVISRFRDRATRVEWRHRIEDHDGDLSSEGGIERWLKLTEGLGLDSGYVESTQGILPATRFAVDAYVHFVRDRTPLEAIASSLTELFAPNLHEERIAGMLAHYDFVNPEIMSYFKRRLEQAPRDADFALRHVKQHATTPAEREAVCNALIFKTNVLWAQLDALHHAYVDGHIPPGAFVPQGF.

It belongs to the PqqC family.

It carries out the reaction 6-(2-amino-2-carboxyethyl)-7,8-dioxo-1,2,3,4,7,8-hexahydroquinoline-2,4-dicarboxylate + 3 O2 = pyrroloquinoline quinone + 2 H2O2 + 2 H2O + H(+). It functions in the pathway cofactor biosynthesis; pyrroloquinoline quinone biosynthesis. Ring cyclization and eight-electron oxidation of 3a-(2-amino-2-carboxyethyl)-4,5-dioxo-4,5,6,7,8,9-hexahydroquinoline-7,9-dicarboxylic-acid to PQQ. The sequence is that of Pyrroloquinoline-quinone synthase from Rhodopseudomonas palustris (strain ATCC BAA-98 / CGA009).